The primary structure comprises 242 residues: DNA repair protein RecO (242 aa).

The protein belongs to the RecO family.

In terms of biological role, involved in DNA repair and RecF pathway recombination. This is DNA repair protein RecO from Dechloromonas aromatica (strain RCB).